The following is an 89-amino-acid chain: Small ribosomal subunit protein uS15 (89 aa).

The protein belongs to the universal ribosomal protein uS15 family. Part of the 30S ribosomal subunit. Forms a bridge to the 50S subunit in the 70S ribosome, contacting the 23S rRNA.

Functionally, one of the primary rRNA binding proteins, it binds directly to 16S rRNA where it helps nucleate assembly of the platform of the 30S subunit by binding and bridging several RNA helices of the 16S rRNA. In terms of biological role, forms an intersubunit bridge (bridge B4) with the 23S rRNA of the 50S subunit in the ribosome. The protein is Small ribosomal subunit protein uS15 of Edwardsiella ictaluri (strain 93-146).